A 913-amino-acid chain; its full sequence is DNA repair endonuclease XPF (913 aa).

Residues methionine 1–aspartate 454 form a helicase-like region. 2 leucine-zipper regions span residues leucine 233–leucine 254 and leucine 270–leucine 298. Position 289 is an N6-acetyllysine (lysine 289). The segment covering glycine 453–serine 476 has biased composition (basic and acidic residues). Disordered regions lie at residues glycine 453–glutamate 525 and valine 638–threonine 677. The Nuclear localization signal motif lies at lysine 483–glutamate 488. Residues glutamate 500 to glutamate 509 show a composition bias toward acidic residues. Residue serine 518 is modified to Phosphoserine. Positions valine 638–threonine 649 are enriched in basic and acidic residues. Residues arginine 655 to phenylalanine 810 are nuclease. An ERCC4 domain is found at serine 680–alanine 760. The tract at residues threonine 834 to tyrosine 902 is hhH2, dimerization with ERCC1.

This sequence belongs to the XPF family. As to quaternary structure, heterodimer composed of ERCC1 and ERCC4/XPF. Interacts with SLX4/BTBD12; this interaction is direct and links the ERCC1-ERCC4/XPF complex to SLX4, which may coordinate the action of the structure-specific endonuclease during DNA repair. Mg(2+) is required as a cofactor.

It is found in the nucleus. The protein localises to the chromosome. Catalytic component of a structure-specific DNA repair endonuclease responsible for the 5-prime incision during DNA repair, and which is essential for nucleotide excision repair (NER) and interstrand cross-link (ICL) repair. This Cricetulus griseus (Chinese hamster) protein is DNA repair endonuclease XPF.